A 302-amino-acid polypeptide reads, in one-letter code: Oxygen-dependent coproporphyrinogen-III oxidase (302 aa).

Substrate is bound at residue S94. 2 residues coordinate a divalent metal cation: H98 and H108. H108 acts as the Proton donor in catalysis. Residue 110–112 (NVR) participates in substrate binding. A divalent metal cation-binding residues include H147 and H177. Positions 242-277 (YVEFNLVFDRGTLFGLQSGGRTESILMSMPPVANWR) are important for dimerization. 260 to 262 (GGR) lines the substrate pocket.

This sequence belongs to the aerobic coproporphyrinogen-III oxidase family. In terms of assembly, homodimer. Requires a divalent metal cation as cofactor.

Its subcellular location is the cytoplasm. It catalyses the reaction coproporphyrinogen III + O2 + 2 H(+) = protoporphyrinogen IX + 2 CO2 + 2 H2O. It participates in porphyrin-containing compound metabolism; protoporphyrin-IX biosynthesis; protoporphyrinogen-IX from coproporphyrinogen-III (O2 route): step 1/1. Its function is as follows. Involved in the heme biosynthesis. Catalyzes the aerobic oxidative decarboxylation of propionate groups of rings A and B of coproporphyrinogen-III to yield the vinyl groups in protoporphyrinogen-IX. The protein is Oxygen-dependent coproporphyrinogen-III oxidase of Ralstonia nicotianae (strain ATCC BAA-1114 / GMI1000) (Ralstonia solanacearum).